We begin with the raw amino-acid sequence, 140 residues long: Nucleoside diphosphate kinase (140 aa).

The ATP site is built by Lys-9, Phe-57, Arg-85, Thr-91, Arg-102, and Asn-112. His-115 serves as the catalytic Pros-phosphohistidine intermediate.

It belongs to the NDK family. As to quaternary structure, homotetramer. Mg(2+) serves as cofactor.

It is found in the cytoplasm. It catalyses the reaction a 2'-deoxyribonucleoside 5'-diphosphate + ATP = a 2'-deoxyribonucleoside 5'-triphosphate + ADP. It carries out the reaction a ribonucleoside 5'-diphosphate + ATP = a ribonucleoside 5'-triphosphate + ADP. In terms of biological role, major role in the synthesis of nucleoside triphosphates other than ATP. The ATP gamma phosphate is transferred to the NDP beta phosphate via a ping-pong mechanism, using a phosphorylated active-site intermediate. The protein is Nucleoside diphosphate kinase of Chlorobium luteolum (strain DSM 273 / BCRC 81028 / 2530) (Pelodictyon luteolum).